Here is a 439-residue protein sequence, read N- to C-terminus: Probable serine/threonine-protein kinase WNK6 (439 aa).

Positions 1 to 30 are disordered; the sequence is MMPPKPAAEDVADEQPEPPDEDPDVAEADP. The span at 10–27 shows a compositional bias: acidic residues; sequence DVADEQPEPPDEDPDVAE. The region spanning 35 to 293 is the Protein kinase domain; it reads LRYREIIGSG…ASELLKSPFL (259 aa). Residues 116–119 and Lys-166 each bind ATP; that span reads TELF. Asp-183 acts as the Proton acceptor in catalysis.

The protein belongs to the protein kinase superfamily. Ser/Thr protein kinase family. WNK subfamily.

It carries out the reaction L-seryl-[protein] + ATP = O-phospho-L-seryl-[protein] + ADP + H(+). It catalyses the reaction L-threonyl-[protein] + ATP = O-phospho-L-threonyl-[protein] + ADP + H(+). The sequence is that of Probable serine/threonine-protein kinase WNK6 (WNK6) from Oryza sativa subsp. japonica (Rice).